Reading from the N-terminus, the 381-residue chain is Putative acyl-CoA dehydrogenase YdbM (381 aa).

Residues 158–160 and 337–341 contribute to the FAD site; these read FTT and RIVGA.

It belongs to the acyl-CoA dehydrogenase family. FAD is required as a cofactor.

This Bacillus subtilis (strain 168) protein is Putative acyl-CoA dehydrogenase YdbM (ydbM).